Reading from the N-terminus, the 305-residue chain is Ribosomal RNA small subunit methyltransferase H (305 aa).

Residues 33–35, D51, F82, D96, and Q103 each bind S-adenosyl-L-methionine; that span reads GGY.

The protein belongs to the methyltransferase superfamily. RsmH family.

It localises to the cytoplasm. The enzyme catalyses cytidine(1402) in 16S rRNA + S-adenosyl-L-methionine = N(4)-methylcytidine(1402) in 16S rRNA + S-adenosyl-L-homocysteine + H(+). Functionally, specifically methylates the N4 position of cytidine in position 1402 (C1402) of 16S rRNA. In Rickettsia bellii (strain OSU 85-389), this protein is Ribosomal RNA small subunit methyltransferase H.